The primary structure comprises 189 residues: Threonylcarbamoyl-AMP synthase (189 aa).

One can recognise a YrdC-like domain in the interval 3-189 (TTSVTEAAEC…NALTGEVIRP (187 aa)).

The protein belongs to the SUA5 family. TsaC subfamily.

The protein resides in the cytoplasm. It carries out the reaction L-threonine + hydrogencarbonate + ATP = L-threonylcarbamoyladenylate + diphosphate + H2O. Functionally, required for the formation of a threonylcarbamoyl group on adenosine at position 37 (t(6)A37) in tRNAs that read codons beginning with adenine. Catalyzes the conversion of L-threonine, HCO(3)(-)/CO(2) and ATP to give threonylcarbamoyl-AMP (TC-AMP) as the acyladenylate intermediate, with the release of diphosphate. This Acinetobacter baumannii (strain ACICU) protein is Threonylcarbamoyl-AMP synthase.